The chain runs to 180 residues: ATP-dependent protease subunit HslV (180 aa).

T6 is an active-site residue. Residues G162, C165, and T168 each contribute to the Na(+) site.

It belongs to the peptidase T1B family. HslV subfamily. In terms of assembly, a double ring-shaped homohexamer of HslV is capped on each side by a ring-shaped HslU homohexamer. The assembly of the HslU/HslV complex is dependent on binding of ATP.

Its subcellular location is the cytoplasm. The catalysed reaction is ATP-dependent cleavage of peptide bonds with broad specificity.. Its activity is regulated as follows. Allosterically activated by HslU binding. Protease subunit of a proteasome-like degradation complex believed to be a general protein degrading machinery. The sequence is that of ATP-dependent protease subunit HslV from Oleidesulfovibrio alaskensis (strain ATCC BAA-1058 / DSM 17464 / G20) (Desulfovibrio alaskensis).